Consider the following 105-residue polypeptide: UPF0145 protein lpg0197 (105 aa).

It belongs to the UPF0145 family.

The polypeptide is UPF0145 protein lpg0197 (Legionella pneumophila subsp. pneumophila (strain Philadelphia 1 / ATCC 33152 / DSM 7513)).